Here is a 246-residue protein sequence, read N- to C-terminus: Probable transcriptional regulatory protein RD1_2018 (246 aa).

Belongs to the TACO1 family.

It localises to the cytoplasm. The protein is Probable transcriptional regulatory protein RD1_2018 of Roseobacter denitrificans (strain ATCC 33942 / OCh 114) (Erythrobacter sp. (strain OCh 114)).